The following is a 175-amino-acid chain: MALTLEQKQQVVAEVSEVAANAYSAVAAEYHGIGVAKLTKLREQAREKGVVLKVVKNTLAKRAFEGTKFESMSDRMTGPLLLAFSMEDLGSAARVIFDFSKDHKALETKLVSVGGVVYGPEELERVSKLPTRDEAISILMATMNAPVTKLVQTMNAVPGKFVRTVAAIKDAKEAA.

The protein belongs to the universal ribosomal protein uL10 family. As to quaternary structure, part of the ribosomal stalk of the 50S ribosomal subunit. The N-terminus interacts with L11 and the large rRNA to form the base of the stalk. The C-terminus forms an elongated spine to which L12 dimers bind in a sequential fashion forming a multimeric L10(L12)X complex.

In terms of biological role, forms part of the ribosomal stalk, playing a central role in the interaction of the ribosome with GTP-bound translation factors. The sequence is that of Large ribosomal subunit protein uL10 from Psychrobacter cryohalolentis (strain ATCC BAA-1226 / DSM 17306 / VKM B-2378 / K5).